A 153-amino-acid chain; its full sequence is Probable Brix domain-containing ribosomal biogenesis protein (153 aa).

Positions 1–153 (MQVLTTSRKP…RILKISRSSR (153 aa)) constitute a Brix domain.

Functionally, probably involved in the biogenesis of the ribosome. The chain is Probable Brix domain-containing ribosomal biogenesis protein from Archaeoglobus fulgidus (strain ATCC 49558 / DSM 4304 / JCM 9628 / NBRC 100126 / VC-16).